A 424-amino-acid polypeptide reads, in one-letter code: MLDIKRIRTDFEAVTEKLATRGVDAAVLNEMKEIDAKRRNILVKVETLKAERNTVSAEIAQAKRNKENTDDKIAAMQNLSAEVKALDAELAEIDAKLTEFTTTLPNIPADSVPVGADEDDNVEVRRWGTPREFDFEPKAHWDLGEDLGILDWERGGKVTGARFLFYKGLGARLERAIYNFMLDEHGKEGYTEVITPYIVNHDSMFGTGQYPKFKEDTFELSDTNFVLIPTAEVPLANYYRDEILDGKDLPIYFTAMSPSFRSEAGSAGRDTRGLIRLHQFHKVEMVKFAKPEESYEELEKMTANAENILQKLNLPYRVVALSTGDMGFSAAKTYDLEVWIPAQNNYREISSCSNTEDFQARRAQIRYRDEADGKVKLLHTLNGSGLAVGRTVAAILENYQNEDGSVTIPEALRPYMGGAEVIKP.

230 to 232 (TAE) serves as a coordination point for L-serine. Residue 261–263 (RSE) participates in ATP binding. Glutamate 284 contacts L-serine. Residue 348–351 (EISS) coordinates ATP. Position 384 (serine 384) interacts with L-serine.

The protein belongs to the class-II aminoacyl-tRNA synthetase family. Type-1 seryl-tRNA synthetase subfamily. In terms of assembly, homodimer. The tRNA molecule binds across the dimer.

The protein localises to the cytoplasm. The enzyme catalyses tRNA(Ser) + L-serine + ATP = L-seryl-tRNA(Ser) + AMP + diphosphate + H(+). The catalysed reaction is tRNA(Sec) + L-serine + ATP = L-seryl-tRNA(Sec) + AMP + diphosphate + H(+). It functions in the pathway aminoacyl-tRNA biosynthesis; selenocysteinyl-tRNA(Sec) biosynthesis; L-seryl-tRNA(Sec) from L-serine and tRNA(Sec): step 1/1. In terms of biological role, catalyzes the attachment of serine to tRNA(Ser). Is also able to aminoacylate tRNA(Sec) with serine, to form the misacylated tRNA L-seryl-tRNA(Sec), which will be further converted into selenocysteinyl-tRNA(Sec). The chain is Serine--tRNA ligase from Streptococcus pneumoniae (strain ATCC 700669 / Spain 23F-1).